The following is a 669-amino-acid chain: Epithelial sodium channel subunit gamma (669 aa).

Residues 1–67 lie on the Cytoplasmic side of the membrane; it reads MAPPYHGDTR…VVSRGRLRKF (67 aa). Residues 68-88 traverse the membrane as a helical segment; that stretch reads IWILLTLSAVGLILWQCAELI. The Extracellular portion of the chain corresponds to 89–551; the sequence is MSYYTASVSV…VILLSNFGGQ (463 aa). 8 disulfide bridges follow: cysteine 113–cysteine 300, cysteine 223–cysteine 231, cysteine 277–cysteine 284, cysteine 389–cysteine 474, cysteine 411–cysteine 470, cysteine 415–cysteine 466, cysteine 424–cysteine 451, and cysteine 426–cysteine 440. A helical transmembrane segment spans residues 552–572; sequence LGLWMSCSMVCVIEIIEVFFI. Topologically, residues 573 to 669 are cytoplasmic; the sequence is DSFSIVMRRR…LPDTLEGRSH (97 aa). The interval 592-619 is disordered; sequence DRKAPRPQEPPQVNAPAKEGHDNPVCTD.

The protein belongs to the amiloride-sensitive sodium channel (TC 1.A.6) family. SCNN1G subfamily. Component of the heterotrimeric epithelial sodium channel (ENaC) composed of an alpha/SCNN1A, a beta/SCNN1B and a gamma/SCNN1G subunit.

The protein resides in the apical cell membrane. It catalyses the reaction Na(+)(in) = Na(+)(out). Its activity is regulated as follows. Originally identified and characterized by its inhibition by the diuretic drug amiloride. Functionally, this is one of the three pore-forming subunits of the heterotrimeric epithelial sodium channel (ENaC), a critical regulator of sodium balance and fluid homeostasis. ENaC operates in epithelial tissues, where it mediates the electrodiffusion of sodium ions from extracellular fluid through the apical membrane of cells, with water following osmotically. This chain is Epithelial sodium channel subunit gamma, found in Pelodiscus sinensis (Chinese softshell turtle).